The following is a 452-amino-acid chain: Na(+)/H(+) antiporter NhaA (452 aa).

Helical transmembrane passes span 23–43 (MMLF…LSTI), 71–91 (LLQF…GLEI), 108–128 (LPIV…LLVV), 136–156 (GAAI…AVLG), 165–185 (VFLT…IALF), 189–209 (HINI…YLMG), 216–236 (LGLY…SGIH), 316–336 (IVGY…TLGG), 349–369 (VFLG…YGFV), 385–405 (LMAV…IATL), and 418–438 (EAKL…IVTL).

This sequence belongs to the NhaA Na(+)/H(+) (TC 2.A.33) antiporter family.

The protein localises to the cell inner membrane. It catalyses the reaction Na(+)(in) + 2 H(+)(out) = Na(+)(out) + 2 H(+)(in). Na(+)/H(+) antiporter that extrudes sodium in exchange for external protons. The chain is Na(+)/H(+) antiporter NhaA from Porphyromonas gingivalis (strain ATCC BAA-308 / W83).